The chain runs to 30 residues: Fibrinogen (30 aa).

As to quaternary structure, homodimer. In terms of tissue distribution, secreted into the hemolymph.

The protein resides in the secreted. It is found in the extracellular space. Its function is as follows. Clotting protein. This Panulirus interruptus (California spiny lobster) protein is Fibrinogen.